A 685-amino-acid chain; its full sequence is uncharacterized protein (685 aa).

Disordered regions lie at residues 78 to 220 (AKQA…HIFD), 251 to 280 (TQNP…RNNE), 296 to 332 (DNNN…NNSE), and 459 to 657 (RNVK…NNKS). A coiled-coil region spans residues 86-139 (KKKETENVEEEGEEKEKKIDDESFPDLLESTEKMKSELSKEKDKKKKQLKDGKK). 2 stretches are compositionally biased toward basic and acidic residues: residues 115–127 (STEK…SKEK) and 165–181 (FNDK…KKND). Over residues 190 to 215 (NNQQNDMNNNNQNNQNNMNNNNNNNN) the composition is skewed to low complexity. A compositionally biased stretch (polar residues) spans 263-276 (LTNNQGENNIPTDN). Over residues 297-307 (NNNNNNNNNNN) the composition is skewed to low complexity. A compositionally biased stretch (polar residues) spans 308-331 (LGSAMNTPMNNMNKGGPRNNVNNS). 2 stretches are compositionally biased toward low complexity: residues 460-474 (NVKN…GNTN) and 481-498 (NNRG…NNFN). Basic and acidic residues predominate over residues 499-515 (RRNDKNDNRNFRRKDID). The segment covering 520–530 (WRNTANPTQEE) has biased composition (polar residues). Positions 531–590 (NNNNMNHNNNYNNNNNNNNNNNNNNNNNNNTNHGKNFRNFNNLNNMKNNNSSNNKMMGMN) are enriched in low complexity. Residues 591–602 (HMQQKGMNSSTG) are compositionally biased toward polar residues. Residues 617-656 (NNKMYKNNMGNANNNNNNNAVNTNFNNNNNNGNFHMNNNK) show a composition bias toward low complexity.

This is an uncharacterized protein from Plasmodium falciparum (isolate 3D7).